We begin with the raw amino-acid sequence, 62 residues long: Sperm protamine P1 (62 aa).

Positions 1-62 (MARYRHSRSR…RYSRRGRRRY (62 aa)) are disordered.

This sequence belongs to the protamine P1 family. Testis.

It is found in the nucleus. The protein localises to the chromosome. Protamines substitute for histones in the chromatin of sperm during the haploid phase of spermatogenesis. They compact sperm DNA into a highly condensed, stable and inactive complex. The polypeptide is Sperm protamine P1 (PRM1) (Trichosurus vulpecula (Brush-tailed possum)).